Consider the following 256-residue polypeptide: Small ribosomal subunit protein bS18m (256 aa).

A disordered region spans residues 19–106 (GQRTAQFSTT…GGQRYGSNSQ (88 aa)). The segment covering 21–30 (RTAQFSTTSP) has biased composition (polar residues). Over residues 44 to 66 (NAPRTNTNTSSPSSNNNNNAGSS) the composition is skewed to low complexity.

Belongs to the bacterial ribosomal protein bS18 family. As to quaternary structure, component of the mitochondrial small ribosomal subunit (mt-SSU). Mature N.crassa 74S mitochondrial ribosomes consist of a small (37S) and a large (54S) subunit. The 37S small subunit contains a 16S ribosomal RNA (16S mt-rRNA) and 32 different proteins. The 54S large subunit contains a 23S rRNA (23S mt-rRNA) and 42 different proteins.

It is found in the mitochondrion. In terms of biological role, component of the mitochondrial ribosome (mitoribosome), a dedicated translation machinery responsible for the synthesis of mitochondrial genome-encoded proteins, including at least some of the essential transmembrane subunits of the mitochondrial respiratory chain. The mitoribosomes are attached to the mitochondrial inner membrane and translation products are cotranslationally integrated into the membrane. The protein is Small ribosomal subunit protein bS18m (rsm18) of Neurospora crassa (strain ATCC 24698 / 74-OR23-1A / CBS 708.71 / DSM 1257 / FGSC 987).